The sequence spans 358 residues: Methylthioribose-1-phosphate isomerase (358 aa).

Substrate contacts are provided by residues 54–56, R96, and Q205; that span reads RGA. D246 acts as the Proton donor in catalysis. 256 to 257 provides a ligand contact to substrate; sequence NK.

The protein belongs to the eIF-2B alpha/beta/delta subunits family. MtnA subfamily.

The enzyme catalyses 5-(methylsulfanyl)-alpha-D-ribose 1-phosphate = 5-(methylsulfanyl)-D-ribulose 1-phosphate. It functions in the pathway amino-acid biosynthesis; L-methionine biosynthesis via salvage pathway; L-methionine from S-methyl-5-thio-alpha-D-ribose 1-phosphate: step 1/6. In terms of biological role, catalyzes the interconversion of methylthioribose-1-phosphate (MTR-1-P) into methylthioribulose-1-phosphate (MTRu-1-P). This chain is Methylthioribose-1-phosphate isomerase, found in Ectopseudomonas mendocina (strain ymp) (Pseudomonas mendocina).